The chain runs to 196 residues: Cilia- and flagella-associated protein 107 (196 aa).

Mn stretches follow at residues 47-62 (TPQCIYRKEYVPMPDH) and 97-109 (ISTYDDHYNRHNY).

In terms of assembly, microtubule inner protein component of sperm flagellar doublet microtubules.

It localises to the cytoplasm. The protein localises to the cytoskeleton. It is found in the cilium axoneme. The protein resides in the flagellum axoneme. Functionally, microtubule inner protein (MIP) part of the dynein-decorated doublet microtubules (DMTs) in cilia axoneme, which is required for motile cilia beating. The sequence is that of Cilia- and flagella-associated protein 107 from Mus musculus (Mouse).